The sequence spans 242 residues: Endoglucanase (242 aa).

Positions 1–21 (MQVIVLPLVFLATFATSGSLA) are cleaved as a signal peptide. Asp47 acts as the Nucleophile in catalysis. N-linked (GlcNAc...) asparagine glycosylation is found at Asn79, Asn103, and Asn217.

This sequence belongs to the glycosyl hydrolase 45 (cellulase K) family. As to expression, expressed in larval carcasses and gut, and adult gut.

The protein localises to the secreted. It catalyses the reaction Endohydrolysis of (1-&gt;4)-beta-D-glucosidic linkages in cellulose, lichenin and cereal beta-D-glucans.. The polypeptide is Endoglucanase (Phaedon cochleariae (Mustard beetle)).